Reading from the N-terminus, the 510-residue chain is NAD(P)H-quinone oxidoreductase subunit 2 B, chloroplastic (510 aa).

13 helical membrane passes run 24–44 (LLLF…GLIL), 57–77 (IPWL…ALLF), 99–119 (IFQF…VEYI), 124–144 (MAIT…MFLC), 149–169 (LITI…LSGY), 183–203 (YLLM…WLYG), 227–247 (PGIS…LSLA), 295–315 (WHLL…LIAI), 323–343 (MLAY…IVGD), 354–374 (YMLF…LFGL), 395–415 (ALSL…AGFF), 418–438 (LHLF…IGLL), and 484–504 (MIVC…IIAI).

Belongs to the complex I subunit 2 family. NDH is composed of at least 16 different subunits, 5 of which are encoded in the nucleus.

The protein resides in the plastid. It is found in the chloroplast thylakoid membrane. It carries out the reaction a plastoquinone + NADH + (n+1) H(+)(in) = a plastoquinol + NAD(+) + n H(+)(out). It catalyses the reaction a plastoquinone + NADPH + (n+1) H(+)(in) = a plastoquinol + NADP(+) + n H(+)(out). In terms of biological role, NDH shuttles electrons from NAD(P)H:plastoquinone, via FMN and iron-sulfur (Fe-S) centers, to quinones in the photosynthetic chain and possibly in a chloroplast respiratory chain. The immediate electron acceptor for the enzyme in this species is believed to be plastoquinone. Couples the redox reaction to proton translocation, and thus conserves the redox energy in a proton gradient. The polypeptide is NAD(P)H-quinone oxidoreductase subunit 2 B, chloroplastic (Citrus sinensis (Sweet orange)).